The chain runs to 339 residues: Ketol-acid reductoisomerase (NADP(+)) (339 aa).

The KARI N-terminal Rossmann domain maps to 1–182; it reads MRVYYDRDAD…GGGRSGIIET (182 aa). NADP(+) is bound by residues 24 to 27, Lys-48, Ser-51, Thr-53, and 83 to 86; these read YGSQ and DELQ. Residue His-108 is part of the active site. Position 134 (Gly-134) interacts with NADP(+). A KARI C-terminal knotted domain is found at 183–328; sequence NFKEECETDL…AKLRGMMPWI (146 aa). Mg(2+) is bound by residues Asp-191, Glu-195, Glu-227, and Glu-231. Ser-252 is a substrate binding site.

This sequence belongs to the ketol-acid reductoisomerase family. The cofactor is Mg(2+).

It catalyses the reaction (2R)-2,3-dihydroxy-3-methylbutanoate + NADP(+) = (2S)-2-acetolactate + NADPH + H(+). It carries out the reaction (2R,3R)-2,3-dihydroxy-3-methylpentanoate + NADP(+) = (S)-2-ethyl-2-hydroxy-3-oxobutanoate + NADPH + H(+). Its pathway is amino-acid biosynthesis; L-isoleucine biosynthesis; L-isoleucine from 2-oxobutanoate: step 2/4. The protein operates within amino-acid biosynthesis; L-valine biosynthesis; L-valine from pyruvate: step 2/4. Functionally, involved in the biosynthesis of branched-chain amino acids (BCAA). Catalyzes an alkyl-migration followed by a ketol-acid reduction of (S)-2-acetolactate (S2AL) to yield (R)-2,3-dihydroxy-isovalerate. In the isomerase reaction, S2AL is rearranged via a Mg-dependent methyl migration to produce 3-hydroxy-3-methyl-2-ketobutyrate (HMKB). In the reductase reaction, this 2-ketoacid undergoes a metal-dependent reduction by NADPH to yield (R)-2,3-dihydroxy-isovalerate. This chain is Ketol-acid reductoisomerase (NADP(+)), found in Sinorhizobium medicae (strain WSM419) (Ensifer medicae).